The sequence spans 146 residues: Ecotin-like protein 1 (146 aa).

The protein belongs to the protease inhibitor I11 (ecotin) family.

The protein is Ecotin-like protein 1 (ISP1) of Leishmania braziliensis.